A 328-amino-acid chain; its full sequence is D-cysteine desulfhydrase (328 aa).

An N6-(pyridoxal phosphate)lysine modification is found at lysine 51.

This sequence belongs to the ACC deaminase/D-cysteine desulfhydrase family. Homodimer. The cofactor is pyridoxal 5'-phosphate.

It carries out the reaction D-cysteine + H2O = hydrogen sulfide + pyruvate + NH4(+) + H(+). Functionally, catalyzes the alpha,beta-elimination reaction of D-cysteine and of several D-cysteine derivatives. It could be a defense mechanism against D-cysteine. This chain is D-cysteine desulfhydrase, found in Escherichia coli O9:H4 (strain HS).